The sequence spans 337 residues: Pseudouridine-5'-phosphate glycosidase (337 aa).

Residue E26 is the Proton donor of the active site. Substrate contacts are provided by K87 and V107. Residue D139 participates in Mn(2+) binding. 141–143 (SAD) serves as a coordination point for substrate. The Nucleophile role is filled by K160. A compositionally biased stretch (low complexity) spans 306-325 (SSGPQAGAGAPGAEPGPARR). The segment at 306–337 (SSGPQAGAGAPGAEPGPARRTSPARAPSGEGW) is disordered.

Belongs to the pseudouridine-5'-phosphate glycosidase family. In terms of assembly, homotrimer. Mn(2+) serves as cofactor.

The enzyme catalyses D-ribose 5-phosphate + uracil = psi-UMP + H2O. In terms of biological role, catalyzes the reversible cleavage of pseudouridine 5'-phosphate (PsiMP) to ribose 5-phosphate and uracil. Functions biologically in the cleavage direction, as part of a pseudouridine degradation pathway. This is Pseudouridine-5'-phosphate glycosidase from Methylobacterium nodulans (strain LMG 21967 / CNCM I-2342 / ORS 2060).